The primary structure comprises 139 residues: UPF0310 protein RSal33209_2865 (139 aa).

This sequence belongs to the UPF0310 family.

In Renibacterium salmoninarum (strain ATCC 33209 / DSM 20767 / JCM 11484 / NBRC 15589 / NCIMB 2235), this protein is UPF0310 protein RSal33209_2865.